The following is a 267-amino-acid chain: Hydroxyethylthiazole kinase (267 aa).

A substrate-binding site is contributed by methionine 42. ATP-binding residues include cysteine 118 and threonine 162. Glycine 189 is a binding site for substrate.

This sequence belongs to the Thz kinase family. Mg(2+) serves as cofactor.

It carries out the reaction 5-(2-hydroxyethyl)-4-methylthiazole + ATP = 4-methyl-5-(2-phosphooxyethyl)-thiazole + ADP + H(+). It participates in cofactor biosynthesis; thiamine diphosphate biosynthesis; 4-methyl-5-(2-phosphoethyl)-thiazole from 5-(2-hydroxyethyl)-4-methylthiazole: step 1/1. Its function is as follows. Catalyzes the phosphorylation of the hydroxyl group of 4-methyl-5-beta-hydroxyethylthiazole (THZ). This Rubrobacter xylanophilus (strain DSM 9941 / JCM 11954 / NBRC 16129 / PRD-1) protein is Hydroxyethylthiazole kinase.